We begin with the raw amino-acid sequence, 592 residues long: Tegument protein US23 (592 aa).

The segment at 407 to 491 (PRSLGDGEEE…NNVVPNVERR (85 aa)) is disordered. Positions 460–481 (ADDEEQGEDDDDSGAEPMEPEE) are enriched in acidic residues.

The protein belongs to the herpesviridae US22 family.

It is found in the virion tegument. In Homo sapiens (Human), this protein is Tegument protein US23 (US23).